The sequence spans 536 residues: Arylsulfatase K (536 aa).

The N-terminal stretch at 1 to 22 (MLLLWVSVVAALALAVLAPGAG) is a signal peptide. 2 residues coordinate Ca(2+): Asp40 and Cys80. The active-site Nucleophile is Cys80. The residue at position 80 (Cys80) is a 3-oxoalanine (Cys). N-linked (GlcNAc...) asparagine glycosylation is present at Asn108. Lys128 is a binding site for substrate. N-linked (GlcNAc...) asparagine glycosylation is found at Asn166 and Asn193. His251 is a binding site for substrate. The N-linked (GlcNAc...) asparagine glycan is linked to Asn262. Ca(2+)-binding residues include Asp313 and His314. Asn375, Asn413, and Asn498 each carry an N-linked (GlcNAc...) asparagine glycan.

It belongs to the sulfatase family. It depends on Ca(2+) as a cofactor. In terms of processing, the conversion to 3-oxoalanine (also known as C-formylglycine, FGly), of a serine or cysteine residue in prokaryotes and of a cysteine residue in eukaryotes, is critical for catalytic activity. The 75-kDa precursor undergoes proteolytic processing to yield a 23 kDa form. Post-translationally, N-glycosylated with both high mannose and complex type sugars. As to expression, expressed at high levels in the placenta and pancreas. Expressed at intermediate levels in the lung, brain, heart, liver and kidney and at low levels in the muscle.

The protein localises to the secreted. The protein resides in the lysosome. The catalysed reaction is an aryl sulfate + H2O = a phenol + sulfate + H(+). It carries out the reaction Hydrolysis of the 2-sulfate groups of the 2-O-sulfo-D-glucuronate residues of chondroitin sulfate, heparin and heparitin sulfate.. Functionally, catalyzes the hydrolysis of pseudosubstrates such as p-nitrocatechol sulfate and p-nitrophenyl sulfate. Catalyzes the hydrolysis of the 2-sulfate groups of the 2-O-sulfo-D-glucuronate residues of chondroitin sulfate, heparin and heparitin sulfate. Acts selectively on 2-sulfoglucuronate and lacks activity against 2-sulfoiduronate. The polypeptide is Arylsulfatase K (ARSK) (Homo sapiens (Human)).